Consider the following 479-residue polypeptide: Aspartyl/glutamyl-tRNA(Asn/Gln) amidotransferase subunit B (479 aa).

It belongs to the GatB/GatE family. GatB subfamily. As to quaternary structure, heterotrimer of A, B and C subunits.

The catalysed reaction is L-glutamyl-tRNA(Gln) + L-glutamine + ATP + H2O = L-glutaminyl-tRNA(Gln) + L-glutamate + ADP + phosphate + H(+). It carries out the reaction L-aspartyl-tRNA(Asn) + L-glutamine + ATP + H2O = L-asparaginyl-tRNA(Asn) + L-glutamate + ADP + phosphate + 2 H(+). Allows the formation of correctly charged Asn-tRNA(Asn) or Gln-tRNA(Gln) through the transamidation of misacylated Asp-tRNA(Asn) or Glu-tRNA(Gln) in organisms which lack either or both of asparaginyl-tRNA or glutaminyl-tRNA synthetases. The reaction takes place in the presence of glutamine and ATP through an activated phospho-Asp-tRNA(Asn) or phospho-Glu-tRNA(Gln). This chain is Aspartyl/glutamyl-tRNA(Asn/Gln) amidotransferase subunit B, found in Mycoplasma capricolum subsp. capricolum (strain California kid / ATCC 27343 / NCTC 10154).